Reading from the N-terminus, the 310-residue chain is HPr kinase/phosphorylase (310 aa).

Residues histidine 138 and lysine 159 contribute to the active site. 153-160 (GASGIGKS) serves as a coordination point for ATP. Serine 160 contacts Mg(2+). Aspartate 177 functions as the Proton acceptor; for phosphorylation activity. Proton donor; for dephosphorylation activity in the catalytic mechanism. Positions 201–210 (IEIRGVGIID) are important for the catalytic mechanism of both phosphorylation and dephosphorylation. Glutamate 202 serves as a coordination point for Mg(2+). Arginine 243 is a catalytic residue. The interval 264–269 (PVKTGR) is important for the catalytic mechanism of dephosphorylation.

Belongs to the HPrK/P family. In terms of assembly, homohexamer. The cofactor is Mg(2+).

The catalysed reaction is [HPr protein]-L-serine + ATP = [HPr protein]-O-phospho-L-serine + ADP + H(+). It carries out the reaction [HPr protein]-O-phospho-L-serine + phosphate + H(+) = [HPr protein]-L-serine + diphosphate. Its function is as follows. Catalyzes the ATP- as well as the pyrophosphate-dependent phosphorylation of a specific serine residue in HPr, a phosphocarrier protein of the phosphoenolpyruvate-dependent sugar phosphotransferase system (PTS). HprK/P also catalyzes the pyrophosphate-producing, inorganic phosphate-dependent dephosphorylation (phosphorolysis) of seryl-phosphorylated HPr (P-Ser-HPr). The two antagonistic activities of HprK/P are regulated by several intracellular metabolites, which change their concentration in response to the absence or presence of rapidly metabolisable carbon sources (glucose, fructose, etc.) in the growth medium. Therefore, by controlling the phosphorylation state of HPr, HPrK/P is a sensor enzyme that plays a major role in the regulation of carbon metabolism and sugar transport: it mediates carbon catabolite repression (CCR), and regulates PTS-catalyzed carbohydrate uptake and inducer exclusion. The sequence is that of HPr kinase/phosphorylase from Lactococcus lactis subsp. cremoris (strain MG1363).